The chain runs to 170 residues: MKTQRDSPSLGRWSLVLLLLGLVMPLAIVAQVLSYQEAVLRAIDGINQRSSDANLYRLLDLDPRPTMDGDPDTPKPVSFTVKETVCPRTTQQSPEDCDFKKDGLVKRCMGTVTLNQARDSFDISCDKDNRRFALPGNFFRKAREKIGKEFKRIVQRIKDFLQHLVPRTEA.

An N-terminal signal peptide occupies residues 1 to 30; the sequence is MKTQRDSPSLGRWSLVLLLLGLVMPLAIVA. A propeptide spans 31–131 (cathelin-like domain (CLD)); sequence QVLSYQEAVL…DISCDKDNRR (101 aa). Cystine bridges form between Cys86/Cys97 and Cys108/Cys125. The segment at 150 to 162 is active core; sequence FKRIVQRIKDFLQ.

This sequence belongs to the cathelicidin family. Monomer, homodimer or homotrimer (in vitro). Oligomerizes as tetra- or hexamer in solution (in vitro). Post-translationally, proteolytically cleaved by proteinase PRTN3 into antibacterial peptide LL-37. Proteolytically cleaved by cathepsin CTSG and neutrophil elastase ELANE. In terms of processing, resistant to proteolytic degradation in solution, and when bound to both zwitterionic (mimicking mammalian membranes) and negatively charged membranes (mimicking bacterial membranes). After secretion onto the skin surface, the CAMP gene product is processed by a serine protease-dependent mechanism into multiple novel antimicrobial peptides distinct from and shorter than cathelicidin LL-37. These peptides show enhanced antimicrobial action, acquiring the ability to kill skin pathogens such as S.aureus, E.coli and C.albicans. These peptides have lost the ability to stimulate CXCL8/IL8 release from keratinocytes. The peptides act synergistically, killing bacteria at lower concentrations when present together, and maintain activity at increased salt condition.

The protein localises to the secreted. It localises to the vesicle. Antimicrobial protein that is an integral component of the innate immune system. Binds to bacterial lipopolysaccharides (LPS). Acts via neutrophil N-formyl peptide receptors to enhance the release of CXCL2. Postsecretory processing generates multiple cathelicidin antimicrobial peptides with various lengths which act as a topical antimicrobial defense in sweat on skin. The unprocessed precursor form, cathelicidin antimicrobial peptide, inhibits the growth of Gram-negative E.coli and E.aerogenes with efficiencies comparable to that of the mature peptide LL-37 (in vitro). Its function is as follows. Antimicrobial peptide that is an integral component of the innate immune system. Binds to bacterial lipopolysaccharides (LPS). Causes membrane permeabilization by forming transmembrane pores (in vitro). Causes lysis of E.coli. Exhibits antimicrobial activity against Gram-negative bacteria such as P.aeruginosa, S.typhimurium, E.aerogenes, E.coli and P.syringae, Gram-positive bacteria such as L.monocytogenes, S.epidermidis, S.pyogenes and S.aureus, as well as vancomycin-resistant enterococci (in vitro). Exhibits antimicrobial activity against methicillin-resistant S.aureus, P.mirabilis, and C.albicans in low-salt media, but not in media containing 100 mM NaCl (in vitro). Forms chiral supramolecular assemblies with quinolone signal (PQS) molecules of P.aeruginosa, which may lead to interference of bacterial quorum signaling and perturbance of bacterial biofilm formation. May form supramolecular fiber-like assemblies on bacterial membranes. Induces cytokine and chemokine producation as well as TNF/TNFA and CSF2/GMCSF production in normal human keratinocytes. Exhibits hemolytic activity against red blood cells. In terms of biological role, exhibits antimicrobial activity against E.coli and B.megaterium (in vitro). The protein is Cathelicidin antimicrobial peptide of Nomascus concolor (Black crested gibbon).